The sequence spans 1183 residues: DNA-directed RNA polymerase subunit beta (1183 aa).

A compositionally biased stretch (acidic residues) spans 1149–1162 (DNEIEMADVDDEDA). The tract at residues 1149–1183 (DNEIEMADVDDEDATERKVDLQQKDVPETQKETTD) is disordered. Over residues 1163-1183 (TERKVDLQQKDVPETQKETTD) the composition is skewed to basic and acidic residues.

It belongs to the RNA polymerase beta chain family. In terms of assembly, the RNAP catalytic core consists of 2 alpha, 1 beta, 1 beta' and 1 omega subunit. When a sigma factor is associated with the core the holoenzyme is formed, which can initiate transcription.

The enzyme catalyses RNA(n) + a ribonucleoside 5'-triphosphate = RNA(n+1) + diphosphate. Its function is as follows. DNA-dependent RNA polymerase catalyzes the transcription of DNA into RNA using the four ribonucleoside triphosphates as substrates. The protein is DNA-directed RNA polymerase subunit beta of Staphylococcus haemolyticus (strain JCSC1435).